A 282-amino-acid chain; its full sequence is Probable phosphatase C1620.13 (282 aa).

His-61 acts as the Tele-phosphohistidine intermediate in catalysis. The Proton donor/acceptor role is filled by Glu-135.

Belongs to the phosphoglycerate mutase family. BPG-dependent PGAM subfamily.

The protein localises to the nucleus. This chain is Probable phosphatase C1620.13, found in Schizosaccharomyces pombe (strain 972 / ATCC 24843) (Fission yeast).